The chain runs to 545 residues: Phenylalanine--tRNA ligase beta subunit (545 aa).

The 77-residue stretch at 266 to 342 folds into the B5 domain; it reads LSPALRNINV…IGAGFGNLEA (77 aa). Residues Asp320, Asp326, Glu329, and Asp330 each coordinate Mg(2+).

The protein belongs to the phenylalanyl-tRNA synthetase beta subunit family. Type 2 subfamily. In terms of assembly, tetramer of two alpha and two beta subunits. The cofactor is Mg(2+).

The protein localises to the cytoplasm. It catalyses the reaction tRNA(Phe) + L-phenylalanine + ATP = L-phenylalanyl-tRNA(Phe) + AMP + diphosphate + H(+). This chain is Phenylalanine--tRNA ligase beta subunit, found in Methanospirillum hungatei JF-1 (strain ATCC 27890 / DSM 864 / NBRC 100397 / JF-1).